The chain runs to 281 residues: 2-dehydro-3-deoxyphosphooctonate aldolase (281 aa).

This sequence belongs to the KdsA family.

The protein resides in the cytoplasm. The enzyme catalyses D-arabinose 5-phosphate + phosphoenolpyruvate + H2O = 3-deoxy-alpha-D-manno-2-octulosonate-8-phosphate + phosphate. The protein operates within carbohydrate biosynthesis; 3-deoxy-D-manno-octulosonate biosynthesis; 3-deoxy-D-manno-octulosonate from D-ribulose 5-phosphate: step 2/3. It participates in bacterial outer membrane biogenesis; lipopolysaccharide biosynthesis. This is 2-dehydro-3-deoxyphosphooctonate aldolase from Pseudomonas syringae pv. syringae (strain B728a).